A 558-amino-acid polypeptide reads, in one-letter code: uncharacterized protein (558 aa).

A DhaL domain is found at 7–206 (SNFIDMLRLG…FACFLEGMLS (200 aa)).

This is an uncharacterized protein from Mycoplasma pneumoniae (strain ATCC 29342 / M129 / Subtype 1) (Mycoplasmoides pneumoniae).